A 367-amino-acid polypeptide reads, in one-letter code: GDSL esterase/lipase 3 (367 aa).

The N-terminal stretch at 1–23 (MVRLVLIIFFVYTIILSIGSINC) is a signal peptide. Ser42 (nucleophile) is an active-site residue. Asn175, Asn194, and Asn321 each carry an N-linked (GlcNAc...) asparagine glycan. Residues Asp329 and His332 contribute to the active site. N-linked (GlcNAc...) asparagine glycosylation occurs at Asn351.

Belongs to the 'GDSL' lipolytic enzyme family.

It localises to the secreted. This chain is GDSL esterase/lipase 3 (GLIP3), found in Arabidopsis thaliana (Mouse-ear cress).